A 562-amino-acid polypeptide reads, in one-letter code: Isochorismate synthase 2, chloroplastic (562 aa).

The N-terminal 55 residues, 1–55 (MASLQCSFHFLGTNPKKYNPSSIFQSYSRTSFTKLSSRVSRQRFLRCTLSMNGCE), are a transit peptide targeting the chloroplast.

It belongs to the isochorismate synthase family. Requires Mg(2+) as cofactor.

It localises to the plastid. It is found in the chloroplast. It carries out the reaction chorismate = isochorismate. The protein operates within siderophore biosynthesis; salicylate biosynthesis. Isochorismate synthase involved in the synthesis of salicylic acid (SA) required for both local and systemic acquired resistance (LAR and SAR) while SA synthesized through the phenylalanine ammonium lyase (PAL) pathway seems to potentiate plant cell death. Also involved in phylloquinone (vitamin K1) synthesis. Has no isochorismate pyruvate lyase (IPL) activity. The polypeptide is Isochorismate synthase 2, chloroplastic (ICS2) (Arabidopsis thaliana (Mouse-ear cress)).